A 212-amino-acid polypeptide reads, in one-letter code: Riboflavin synthase (212 aa).

2 Lumazine-binding repeats span residues 1–97 and 98–195; these read MFTG…VGGH and LVSG…VDSV. Residues 4-6, 48-50, 62-67, 101-103, lysine 137, 146-148, and 160-165 each bind 2,4-dihydroxypteridine; these read GIV, CLT, DIVEET, GHI, SLT, and FLIPET.

In terms of assembly, homotrimer.

It carries out the reaction 2 6,7-dimethyl-8-(1-D-ribityl)lumazine + H(+) = 5-amino-6-(D-ribitylamino)uracil + riboflavin. It participates in cofactor biosynthesis; riboflavin biosynthesis; riboflavin from 2-hydroxy-3-oxobutyl phosphate and 5-amino-6-(D-ribitylamino)uracil: step 2/2. Catalyzes the dismutation of two molecules of 6,7-dimethyl-8-ribityllumazine, resulting in the formation of riboflavin and 5-amino-6-(D-ribitylamino)uracil. In Buchnera aphidicola subsp. Baizongia pistaciae (strain Bp), this protein is Riboflavin synthase (ribE).